A 326-amino-acid polypeptide reads, in one-letter code: Centriolar satellite-associated tubulin polyglutamylase complex regulator 1 (326 aa).

The interval 1–111 is required for interaction with PCM1; the sequence is MLSPERLALP…HCLLQLLCPD (111 aa). Residues 1–225 form a required for interaction with TPGS1, LRRC49, and TTLL1 region; the sequence is MLSPERLALP…SCPPPALVKE (225 aa).

The protein belongs to the CSTPP1 family. Interacts with PCM1. Interacts with TTLL1, TPGS1, TPGS2 and LRRC49; the interactions link CSTPP1 to the complex TPGC. Binds to alpha-tubulin.

Its subcellular location is the cytoplasm. It is found in the cytoskeleton. The protein localises to the microtubule organizing center. The protein resides in the centrosome. It localises to the centriolar satellite. In terms of biological role, regulator of the tubulin polyglutamylase complex (TPGC) that controls cytoskeletal organization, nuclear shape, and cilium disassembly by balancing microtubule and actin assembly. Regulates the assembly and stability of the TPGC and thereby modulates polyglutamylation of the microtubule, which antagonizes MAP4 binding. This Bos taurus (Bovine) protein is Centriolar satellite-associated tubulin polyglutamylase complex regulator 1 (CSTPP1).